We begin with the raw amino-acid sequence, 242 residues long: 3-deoxy-manno-octulosonate cytidylyltransferase (242 aa).

It belongs to the KdsB family.

The protein resides in the cytoplasm. It catalyses the reaction 3-deoxy-alpha-D-manno-oct-2-ulosonate + CTP = CMP-3-deoxy-beta-D-manno-octulosonate + diphosphate. Its pathway is nucleotide-sugar biosynthesis; CMP-3-deoxy-D-manno-octulosonate biosynthesis; CMP-3-deoxy-D-manno-octulosonate from 3-deoxy-D-manno-octulosonate and CTP: step 1/1. The protein operates within bacterial outer membrane biogenesis; lipopolysaccharide biosynthesis. In terms of biological role, activates KDO (a required 8-carbon sugar) for incorporation into bacterial lipopolysaccharide in Gram-negative bacteria. The protein is 3-deoxy-manno-octulosonate cytidylyltransferase of Anaeromyxobacter dehalogenans (strain 2CP-1 / ATCC BAA-258).